The chain runs to 383 residues: E3 ubiquitin-protein ligase KCMF1 (383 aa).

The ZZ-type zinc-finger motif lies at 4–60; it reads HEGVSCDACLKGNFRGRRYKCLICYDYDLCASCYESGATTTRHTTEHPMQCILTRVD. Zn(2+)-binding residues include cysteine 9, cysteine 12, cysteine 24, cysteine 27, cysteine 33, cysteine 36, histidine 46, and histidine 50. A C2H2-type zinc finger spans residues 78-101; it reads FTCPYCGKMGYTETSLQEHVTSEH. Disordered stretches follow at residues 141 to 194 and 242 to 289; these read DLDE…PSNR and AQAA…LASH. Composition is skewed to low complexity over residues 175–192 and 260–279; these read SSST…YSPS and SNPS…TNTA. Positions 224 to 261 form a coiled coil; sequence SASQLQQLQMQLQLERQQAQAARQQLETARNATRQRSN. A compositionally biased stretch (polar residues) spans 280–289; it reads MTESNPLASH.

It belongs to the KCMF1 family. Component of the SIFI complex, composed of kcmf1, ubr4 and calmodulin.

The protein localises to the cytoplasm. It is found in the late endosome. Its subcellular location is the lysosome. The catalysed reaction is S-ubiquitinyl-[E2 ubiquitin-conjugating enzyme]-L-cysteine + [acceptor protein]-L-lysine = [E2 ubiquitin-conjugating enzyme]-L-cysteine + N(6)-ubiquitinyl-[acceptor protein]-L-lysine.. It participates in protein modification; protein ubiquitination. Functionally, E3 ubiquitin-protein ligase which accepts ubiquitin from an E2 ubiquitin-conjugating enzyme and then transfers it to targeted substrates, promoting their degradation by the proteasome. Together with UBR4, component of the N-end rule pathway: ubiquitinates proteins bearing specific N-terminal residues that are destabilizing according to the N-end rule, leading to their degradation. Does not ubiquitinate proteins that are acetylated at the N-terminus. Together with ubr4, part of a protein quality control pathway that catalyzes ubiquitination and degradation of proteins that have been oxidized in response to reactive oxygen species (ROS): recognizes proteins with an Arg-CysO3(H) degron at the N-terminus, and mediates assembly of heterotypic 'Lys-63'-/'Lys-27'-linked branched ubiquitin chains on oxidized proteins, leading to their degradation by autophagy. Catalytic component of the SIFI complex, a multiprotein complex required to inhibit the mitochondrial stress response after a specific stress event has been resolved: ubiquitinates and degrades (1) components of the HRI-mediated signaling of the integrated stress response, such as dele1 and eif2ak1/hri, as well as (2) unimported mitochondrial precursors. Within the SIFI complex, ubr4 initiates ubiquitin chain that are further elongated or branched by kcmf1. The sequence is that of E3 ubiquitin-protein ligase KCMF1 (kcmf1) from Danio rerio (Zebrafish).